Reading from the N-terminus, the 244-residue chain is 7-cyano-7-deazaguanine synthase (244 aa).

Position 14–24 (14–24) interacts with ATP; that stretch reads FSGGQDSATCV. Positions 202, 217, 220, and 223 each coordinate Zn(2+).

Belongs to the QueC family. It depends on Zn(2+) as a cofactor.

It carries out the reaction 7-carboxy-7-deazaguanine + NH4(+) + ATP = 7-cyano-7-deazaguanine + ADP + phosphate + H2O + H(+). It functions in the pathway purine metabolism; 7-cyano-7-deazaguanine biosynthesis. In terms of biological role, catalyzes the ATP-dependent conversion of 7-carboxy-7-deazaguanine (CDG) to 7-cyano-7-deazaguanine (preQ(0)). This chain is 7-cyano-7-deazaguanine synthase, found in Burkholderia ambifaria (strain MC40-6).